A 542-amino-acid polypeptide reads, in one-letter code: Chaperonin GroEL (542 aa).

ATP contacts are provided by residues Thr29–Pro32, Lys50, Asp86–Thr90, Gly414, Asn477–Ala479, and Asp493.

The protein belongs to the chaperonin (HSP60) family. In terms of assembly, forms a cylinder of 14 subunits composed of two heptameric rings stacked back-to-back. Interacts with the co-chaperonin GroES.

Its subcellular location is the cytoplasm. The catalysed reaction is ATP + H2O + a folded polypeptide = ADP + phosphate + an unfolded polypeptide.. Functionally, together with its co-chaperonin GroES, plays an essential role in assisting protein folding. The GroEL-GroES system forms a nano-cage that allows encapsulation of the non-native substrate proteins and provides a physical environment optimized to promote and accelerate protein folding. The polypeptide is Chaperonin GroEL (Sulfurovum sp. (strain NBC37-1)).